The chain runs to 128 residues: MLPLLALLLLIGPSVCTTAGDREELAFGAEAESWVTVNLKGIPVPSIELKLQELKRSRTRQFYGLMGKRVGGYQLGRIVQDLLGTRGLSIEGTCRQAASQQRARPGAVTRESLQSREEDEAPLTTSNV.

An N-terminal signal peptide occupies residues 1–16 (MLPLLALLLLIGPSVC). A propeptide spanning residues 17–54 (TTAGDREELAFGAEAESWVTVNLKGIPVPSIELKLQEL) is cleaved from the precursor. M66 bears the Methionine amide mark. A propeptide spanning residues 69–128 (RVGGYQLGRIVQDLLGTRGLSIEGTCRQAASQQRARPGAVTRESLQSREEDEAPLTTSNV) is cleaved from the precursor. Residues 96–128 (QAASQQRARPGAVTRESLQSREEDEAPLTTSNV) are disordered.

The protein belongs to the tachykinin family. As to expression, expressed in hematopoietic cells with highest levels in pre- and pro-B cells but not in later developmental stages. Also detected in uterus, skeletal muscle, brain, spleen, stomach, skin and lactating mammary gland and in cells of myeloid lineage including dendritic and microglial cells and macrophages. In uterus, highest expression is observed in non-pregnant diestrus mice and in day 5 pregnant mice. Compared with mice in diestrus, decreases 2.6-fold in uteri from non-pregnant mice in estrus and 10.2-fold in day 17 pregnant mice. Detected at sites of chronic inflammation such as granulomas.

The protein localises to the secreted. Tachykinins are active peptides which excite neurons, evoke behavioral responses, are potent vasodilators and secretagogues, and contract (directly or indirectly) many smooth muscles. Hemokinin induces plasma extravasation, mast cell degranulation, muscle contraction, salivary secretion and scratching behavior. Increases sperm motility. Induces potent analgesic effects and may play a role in pain modulation. Promotes survival of bone marrow B lineage cells and of cultured LPS-stimulated pre-B cells and may act as an autocrine factor required for B-cell survival and proliferation. Lowers systemic arterial pressure following intravenous injection. Induces interferon-gamma production and may play a role in the inflammatory response. Shows potent affinity and specificity for the NK-1 receptor. This is Tachykinin-4 from Mus musculus (Mouse).